Reading from the N-terminus, the 504-residue chain is Zinc finger CCCH domain-containing protein 18 (504 aa).

Positions 40–69 (SNADLLEVHEELLAAIKDAEEGLLHLKRSR) form a coiled coil. A disordered region spans residues 77–105 (IFPNQEPTSEAPEVAVDPPDDVEPEPLEP). Acidic residues predominate over residues 94–104 (PPDDVEPEPLE). The segment at 146–173 (SENMSMCKFFLQQRCRFGSNCRLSHGIV) adopts a C3H1-type zinc-finger fold. The interval 230 to 276 (GSSARLPSDSLSISEYADESDEDGEGSSSDEGSDFSEDGDQEDESVH) is disordered. Composition is skewed to acidic residues over residues 245–254 (YADESDEDGE) and 260–272 (EGSD…DQED). Residues 304-350 (TRGVASKMMAKMGYREGMGLGVSGQGMLDPIPVKVLPPKQSLDHAVA) form the G-patch domain. Disordered stretches follow at residues 351 to 390 (ASEV…EEER), 406 to 432 (AEGS…DRRS), and 482 to 504 (EATH…WLKF). Basic residues predominate over residues 361 to 374 (GKKRSRGGKRKREK). Basic and acidic residues-rich tracts occupy residues 375–390 (KFAE…EEER), 413–432 (SKKD…DRRS), and 493–504 (ARKEKEKKWLKF). Residues 430-500 (RRSLLAYDDE…AVARKEKEKK (71 aa)) are a coiled coil.

The protein is Zinc finger CCCH domain-containing protein 18 of Oryza sativa subsp. japonica (Rice).